Reading from the N-terminus, the 347-residue chain is UDP-N-acetylglucosamine--N-acetylmuramyl-(pentapeptide) pyrophosphoryl-undecaprenol N-acetylglucosamine transferase (347 aa).

UDP-N-acetyl-alpha-D-glucosamine contacts are provided by residues 11–13, N122, R163, S189, and Q279; that span reads TGG.

Belongs to the glycosyltransferase 28 family. MurG subfamily.

It is found in the cell inner membrane. The enzyme catalyses di-trans,octa-cis-undecaprenyl diphospho-N-acetyl-alpha-D-muramoyl-L-alanyl-D-glutamyl-meso-2,6-diaminopimeloyl-D-alanyl-D-alanine + UDP-N-acetyl-alpha-D-glucosamine = di-trans,octa-cis-undecaprenyl diphospho-[N-acetyl-alpha-D-glucosaminyl-(1-&gt;4)]-N-acetyl-alpha-D-muramoyl-L-alanyl-D-glutamyl-meso-2,6-diaminopimeloyl-D-alanyl-D-alanine + UDP + H(+). It functions in the pathway cell wall biogenesis; peptidoglycan biosynthesis. Cell wall formation. Catalyzes the transfer of a GlcNAc subunit on undecaprenyl-pyrophosphoryl-MurNAc-pentapeptide (lipid intermediate I) to form undecaprenyl-pyrophosphoryl-MurNAc-(pentapeptide)GlcNAc (lipid intermediate II). The sequence is that of UDP-N-acetylglucosamine--N-acetylmuramyl-(pentapeptide) pyrophosphoryl-undecaprenol N-acetylglucosamine transferase from Sulfurihydrogenibium sp. (strain YO3AOP1).